The following is a 1749-amino-acid chain: Kinesin-like protein KIF13A (1749 aa).

The 348-residue stretch at Lys-5–Ile-352 folds into the Kinesin motor domain. Residue Gly-102 to Ser-109 coordinates ATP. Positions Asn-359–Met-431 form a coiled coil. One can recognise an FHA domain in the interval His-469–Val-519. Positions Leu-552–Lys-775 form a coiled coil. Disordered stretches follow at residues Gln-633–Ser-652 and Ile-834–Leu-853. Residue Ser-636 is modified to Phosphoserine. A coiled-coil region spans residues Ser-1086–Gly-1126. Ser-1274 is modified (phosphoserine). Over residues Leu-1370 to Pro-1383 the composition is skewed to polar residues. Disordered stretches follow at residues Leu-1370–Val-1402 and Thr-1417–His-1436. The span at Asp-1421 to Cys-1430 shows a compositional bias: basic and acidic residues. Residues Ser-1441, Ser-1477, Ser-1481, Ser-1524, Ser-1600, and Ser-1650 each carry the phosphoserine modification. Positions Leu-1475 to Gln-1499 form a coiled coil. Disordered stretches follow at residues Cys-1584 to Ala-1665 and Asp-1698 to Arg-1749. Residues Glu-1719–Asn-1741 show a composition bias toward basic and acidic residues.

This sequence belongs to the TRAFAC class myosin-kinesin ATPase superfamily. Kinesin family. In terms of assembly, interacts with AP1G1 and AP1G2. Interacts with ZFYVE26. Interacts with AP2B1.

It localises to the golgi apparatus membrane. It is found in the cytoplasm. Its subcellular location is the cytoskeleton. The protein localises to the microtubule organizing center. The protein resides in the centrosome. It localises to the midbody. It is found in the endosome membrane. Its function is as follows. Plus end-directed microtubule-dependent motor protein involved in intracellular transport and regulating various processes such as mannose-6-phosphate receptor (M6PR) transport to the plasma membrane, endosomal sorting during melanosome biogenesis and cytokinesis. During melanosome maturation, required for delivering melanogenic enzymes from recycling endosomes to nascent melanosomes by creating peripheral recycling endosomal subdomains in melanocytes. Also required for the abscission step in cytokinesis: mediates translocation of ZFYVE26, and possibly TTC19, to the midbody during cytokinesis. Mediates the transport of M6PR-containing vesicles from trans-Golgi network to the plasma membrane via direct interaction with the AP-1 complex. The sequence is that of Kinesin-like protein KIF13A (Kif13a) from Mus musculus (Mouse).